The chain runs to 462 residues: Kinetochore protein nsk1 (462 aa).

The segment covering 104 to 120 (PSKNHETSLSPSKSTID) has biased composition (polar residues). 3 disordered regions span residues 104–161 (PSKN…CPGI), 180–240 (EKYG…PLRT), and 320–462 (NQLF…NIQS). Residues 121–138 (NNERKLDNEIDNYKHDVK) are compositionally biased toward basic and acidic residues. Polar residues predominate over residues 146–156 (GKTSNPSQGTT). Basic and acidic residues predominate over residues 180–189 (EKYGKTDLGK). A compositionally biased stretch (polar residues) spans 229–240 (KNRSSTFSPLRT). Residues 324–333 (KSEEEKDPVG) show a composition bias toward basic and acidic residues. Over residues 422–444 (WPQNLAKNNINSEPNTPTKSNID) the composition is skewed to polar residues. A compositionally biased stretch (basic residues) spans 449-462 (HSARAHKTRKNIQS).

As to quaternary structure, interacts with dlc1. The dlc1-nsk1 complex seems to oligomerize in chain-like structures. Also binds directly to spindle microtubules. In terms of processing, phosphorylated by cdk1 at prometaphase arrest. Phosphorylation prevents nsk1 kinetochore and spindle targeting. Dephosphorylated by clp1 at anaphase onset controls its relocalization.

The protein localises to the nucleus. Its subcellular location is the nucleolus. It localises to the cytoplasm. It is found in the cytoskeleton. The protein resides in the spindle. The protein localises to the chromosome. Its subcellular location is the centromere. It localises to the kinetochore. Ensures chromosome alignment and accurate chromosome segregation during mitosis. Promotes proper kinetochore-microtubule (k-MT) interactions during anaphase B. The phosphorylation status of nsk1 affects the proper k-MT coupling, ensuring that it interacts stably only at the correct time during mitosis. This chain is Kinetochore protein nsk1 (nsk1), found in Schizosaccharomyces pombe (strain 972 / ATCC 24843) (Fission yeast).